A 357-amino-acid chain; its full sequence is Alanine racemase (357 aa).

Catalysis depends on Lys-35, which acts as the Proton acceptor; specific for D-alanine. Lys-35 carries the N6-(pyridoxal phosphate)lysine modification. Substrate is bound at residue Arg-131. Tyr-256 acts as the Proton acceptor; specific for L-alanine in catalysis. Met-304 lines the substrate pocket.

This sequence belongs to the alanine racemase family. The cofactor is pyridoxal 5'-phosphate.

The enzyme catalyses L-alanine = D-alanine. It participates in amino-acid biosynthesis; D-alanine biosynthesis; D-alanine from L-alanine: step 1/1. In terms of biological role, catalyzes the interconversion of L-alanine and D-alanine. May also act on other amino acids. The chain is Alanine racemase (alr) from Legionella pneumophila (strain Paris).